Here is a 239-residue protein sequence, read N- to C-terminus: Probable transcriptional regulatory protein MG332 (239 aa).

Belongs to the TACO1 family.

It is found in the cytoplasm. The chain is Probable transcriptional regulatory protein MG332 from Mycoplasma genitalium (strain ATCC 33530 / DSM 19775 / NCTC 10195 / G37) (Mycoplasmoides genitalium).